Reading from the N-terminus, the 302-residue chain is D-alanine--D-alanine ligase (302 aa).

The ATP-grasp domain maps to K99–D298. Residue L128–T183 coordinates ATP. Residues D252, E265, and N267 each contribute to the Mg(2+) site.

This sequence belongs to the D-alanine--D-alanine ligase family. It depends on Mg(2+) as a cofactor. The cofactor is Mn(2+).

The protein resides in the cytoplasm. It carries out the reaction 2 D-alanine + ATP = D-alanyl-D-alanine + ADP + phosphate + H(+). It functions in the pathway cell wall biogenesis; peptidoglycan biosynthesis. In terms of biological role, cell wall formation. The sequence is that of D-alanine--D-alanine ligase from Gloeobacter violaceus (strain ATCC 29082 / PCC 7421).